We begin with the raw amino-acid sequence, 1205 residues long: ATP-dependent DNA helicase MER3 homolog (1205 aa).

In terms of domain architecture, Helicase ATP-binding spans P41–K236. A54–T61 is an ATP binding site. A DEAH box motif is present at residues D172–H175. The region spanning R266 to I467 is the Helicase C-terminal domain. In terms of domain architecture, SEC63 spans P541–H852. The segment covering Q1075–L1091 has biased composition (polar residues). Residues Q1075–N1131 are disordered. Residues K1095–K1122 show a composition bias toward basic and acidic residues.

The protein belongs to the helicase family. SKI2 subfamily. Transcribed preferentially in early stages of meiocyte development and during meiosis in young flowers.

It is found in the nucleus. The protein resides in the chromosome. It carries out the reaction Couples ATP hydrolysis with the unwinding of duplex DNA by translocating in the 3'-5' direction.. It catalyses the reaction ATP + H2O = ADP + phosphate + H(+). In terms of biological role, DNA helicase required for crossover formation, complete synapsis of homologous chromosomes and bivalent formation during meiosis. Is specific to recombination events resulting in interference-sensitive crossovers (class I meiotic crossover). Works cooperatively with ZIP4 to promote crossovers. This Oryza sativa subsp. japonica (Rice) protein is ATP-dependent DNA helicase MER3 homolog.